We begin with the raw amino-acid sequence, 865 residues long: Leucine--tRNA ligase (865 aa).

Positions 58 to 68 (PYPSGNLHMGH) match the 'HIGH' region motif. The short motif at 629–633 (KMSKS) is the 'KMSKS' region element. Lysine 632 lines the ATP pocket.

This sequence belongs to the class-I aminoacyl-tRNA synthetase family.

Its subcellular location is the cytoplasm. The catalysed reaction is tRNA(Leu) + L-leucine + ATP = L-leucyl-tRNA(Leu) + AMP + diphosphate. The polypeptide is Leucine--tRNA ligase (Synechococcus elongatus (strain ATCC 33912 / PCC 7942 / FACHB-805) (Anacystis nidulans R2)).